The sequence spans 554 residues: Phenylalanine--tRNA ligase beta subunit (554 aa).

One can recognise a B5 domain in the interval Leu276 to Gly351. Mg(2+) contacts are provided by Asp329, Asp335, Glu338, and Glu339.

The protein belongs to the phenylalanyl-tRNA synthetase beta subunit family. Type 2 subfamily. In terms of assembly, tetramer of two alpha and two beta subunits. Mg(2+) is required as a cofactor.

It localises to the cytoplasm. The catalysed reaction is tRNA(Phe) + L-phenylalanine + ATP = L-phenylalanyl-tRNA(Phe) + AMP + diphosphate + H(+). In Methanococcus maripaludis (strain C7 / ATCC BAA-1331), this protein is Phenylalanine--tRNA ligase beta subunit.